A 262-amino-acid polypeptide reads, in one-letter code: MIDQTAFIHPSSIVEDGAIIGAGVHIGPFCYIGSQVEIGAGTVLKSHVVVNGVTKIGRDNEIYQFTSIGEVNQDLKYAGEPTRVEIGDRNRIRESVTIHRGTTQGGGLTKVGSDNLLMINTHIAHDCVVGNRCILANNATLGGHVSVDDFAIIGGMTAVHQFCIIGAHVMVGGCSGVAQDVPPYVIAQGNHATPFGLNIEGLKRRGFEKDTLHAIRNAYKLLYRSGKTLDEVKPEIEALAAEHPAVQAFTDFFARSTRGIIR.

Belongs to the transferase hexapeptide repeat family. LpxA subfamily. Homotrimer.

It localises to the cytoplasm. It carries out the reaction a (3R)-hydroxyacyl-[ACP] + UDP-N-acetyl-alpha-D-glucosamine = a UDP-3-O-[(3R)-3-hydroxyacyl]-N-acetyl-alpha-D-glucosamine + holo-[ACP]. Its pathway is glycolipid biosynthesis; lipid IV(A) biosynthesis; lipid IV(A) from (3R)-3-hydroxytetradecanoyl-[acyl-carrier-protein] and UDP-N-acetyl-alpha-D-glucosamine: step 1/6. Functionally, involved in the biosynthesis of lipid A, a phosphorylated glycolipid that anchors the lipopolysaccharide to the outer membrane of the cell. The polypeptide is Acyl-[acyl-carrier-protein]--UDP-N-acetylglucosamine O-acyltransferase (Pectobacterium carotovorum subsp. carotovorum (strain PC1)).